The following is a 507-amino-acid chain: Cytochrome P450 7B1 (507 aa).

Transmembrane regions (helical) follow at residues 14–34 (PLALLGLLFAATLLLSALFLL), 178–198 (IFAFCGSLVFEITFATLYGKI), and 287–307 (FLWASLANTIPAMFWAMYYIL). Cys447 is a binding site for heme.

Belongs to the cytochrome P450 family. Requires heme as cofactor. Highly expressed in brain structures including the corpus callosum, the anterior commissure and fornix. The hippocampal expression is particularly prominent in the dentate gyrus. Expressed in liver and kidney. The hepatic expression is sexually dimorphic, predominantly detected in male liver while barely detectable in females. Expressed in lymph nodes and spleens, in both lymphoid and stromal compartments. Higher expression is detected in fibroblastic reticular cells, a type of stromal cells in the lymph nodes. Also expressed at high levels in the outer follicle and at the B cell-T cell boundary of splenic germinal centers. Expressed in dendritic cells (DCs) subpopulations being most abundant in CD8-positive DCs.

The protein localises to the endoplasmic reticulum membrane. The protein resides in the microsome membrane. It catalyses the reaction 25-hydroxycholesterol + reduced [NADPH--hemoprotein reductase] + O2 = 7alpha,25-dihydroxycholesterol + oxidized [NADPH--hemoprotein reductase] + H2O + H(+). The enzyme catalyses (25R)-cholest-5-ene-3beta,26-diol + reduced [NADPH--hemoprotein reductase] + O2 = (25R)-cholest-5-en-3beta,7alpha,26-triol + oxidized [NADPH--hemoprotein reductase] + H2O + H(+). It carries out the reaction (24S)-hydroxycholesterol + reduced [NADPH--hemoprotein reductase] + O2 = (24S)-7alpha-dihydroxycholesterol + oxidized [NADPH--hemoprotein reductase] + H2O + H(+). The catalysed reaction is (24S)-25-epoxycholesterol + reduced [NADPH--hemoprotein reductase] + O2 = (24S,25)-epoxy-7alpha-hydroxycholesterol + oxidized [NADPH--hemoprotein reductase] + H2O + H(+). It catalyses the reaction (22R)-hydroxycholesterol + reduced [NADPH--hemoprotein reductase] + O2 = (22R,7alpha)-dihydroxycholesterol + oxidized [NADPH--hemoprotein reductase] + H2O + H(+). The enzyme catalyses androst-5-en-3beta,17beta-diol + reduced [NADPH--hemoprotein reductase] + O2 = androst-5-en-3beta,7alpha,17beta-triol + oxidized [NADPH--hemoprotein reductase] + H2O + H(+). It carries out the reaction 5alpha-androstane-3beta,17beta-diol + reduced [NADPH--hemoprotein reductase] + O2 = 5alpha-androstane-3beta,6alpha,17beta-triol + oxidized [NADPH--hemoprotein reductase] + H2O + H(+). The catalysed reaction is 3beta-hydroxyandrost-5-en-17-one + reduced [NADPH--hemoprotein reductase] + O2 = 3beta,7alpha-dihydroxyandrost-5-en-17-one + oxidized [NADPH--hemoprotein reductase] + H2O + H(+). It catalyses the reaction 3beta-hydroxy-5alpha-androstan-17-one + reduced [NADPH--hemoprotein reductase] + O2 = 3beta,7alpha-dihydroxy-5alpha-androstan-17-one + oxidized [NADPH--hemoprotein reductase] + H2O + H(+). The enzyme catalyses pregnenolone + reduced [NADPH--hemoprotein reductase] + O2 = 7alpha-hydroxypregnenolone + oxidized [NADPH--hemoprotein reductase] + H2O + H(+). It participates in lipid metabolism; bile acid biosynthesis. The protein operates within steroid hormone biosynthesis. Inhibited by drugs voriconazole and metyrapone. A cytochrome P450 monooxygenase involved in the metabolism of endogenous oxysterols and steroid hormones, including neurosteroids. Mechanistically, uses molecular oxygen inserting one oxygen atom into a substrate, and reducing the second into a water molecule, with two electrons provided by NADPH via cytochrome P450 reductase (CPR; NADPH-ferrihemoprotein reductase). Catalyzes the hydroxylation of carbon hydrogen bonds of steroids with a preference for 7-alpha position. Usually metabolizes steroids carrying a hydroxy group at position 3, functioning as a 3-hydroxy steroid 7-alpha hydroxylase. Hydroxylates oxysterols, including 25-hydroxycholesterol and (25R)-cholest-5-ene-3beta,26-diol toward 7-alpha hydroxy derivatives, which may be transported to the liver and converted to bile acids. Via its product 7-alpha,25-dihydroxycholesterol, a ligand for the chemotactic G protein-coupled receptor GPR183/EBI2, regulates B cell migration in germinal centers of lymphoid organs, thus guiding efficient maturation of plasma B cells and overall antigen-specific humoral immune response. 7-alpha hydroxylates neurosteroids, including 3beta-hydroxyandrost-5-en-17-one (dehydroepiandrosterone) and pregnenolone, both involved in hippocampus-associated memory and learning. Metabolizes androstanoids toward 6- or 7-alpha hydroxy derivatives. The chain is Cytochrome P450 7B1 from Mus musculus (Mouse).